A 73-amino-acid polypeptide reads, in one-letter code: Pollen allergen Amb t 5 (73 aa).

The N-terminal stretch at 1–20 (MKNIFMLTLFILIITSTIKA) is a signal peptide. The propeptide occupies 21 to 33 (IGSTNEVDEIKQE). 4 disulfides stabilise this stretch: C38–C68, C44–C59, C51–C61, and C52–C72.

As to quaternary structure, monomer.

The chain is Pollen allergen Amb t 5 from Ambrosia trifida (Giant ragweed).